The chain runs to 110 residues: Large ribosomal subunit protein uL22 (110 aa).

This sequence belongs to the universal ribosomal protein uL22 family. In terms of assembly, part of the 50S ribosomal subunit.

In terms of biological role, this protein binds specifically to 23S rRNA; its binding is stimulated by other ribosomal proteins, e.g. L4, L17, and L20. It is important during the early stages of 50S assembly. It makes multiple contacts with different domains of the 23S rRNA in the assembled 50S subunit and ribosome. The globular domain of the protein is located near the polypeptide exit tunnel on the outside of the subunit, while an extended beta-hairpin is found that lines the wall of the exit tunnel in the center of the 70S ribosome. The chain is Large ribosomal subunit protein uL22 from Pseudoalteromonas atlantica (strain T6c / ATCC BAA-1087).